The chain runs to 318 residues: 2-methyl-6-phytyl-1,4-hydroquinone methyltransferase (318 aa).

Residues 1 to 39 form the signal peptide; that stretch reads MPEYLLLPAGLISLSLAIAAGLYLLTARGYQSSDSVANA. The SAM motif I stretch occupies residues 97 to 106; the sequence is VLDVGCGIGG. The tract at residues 157–165 is SAM motif II; it reads GSFDVVWSV. The segment at 184-193 is SAM motif III; sequence VVKPGGILVV.

Belongs to the class I-like SAM-binding methyltransferase superfamily. gTMT family.

It carries out the reaction 2-methyl-6-phytyl-1,4-benzene-1,4-diol + S-adenosyl-L-methionine = 2,3-dimethyl-6-phytylbenzene-1,4-diol + S-adenosyl-L-homocysteine + H(+). It catalyses the reaction 2-methyl-6-(all-trans-nonaprenyl)benzene-1,4-diol + S-adenosyl-L-methionine = plastoquinol-9 + S-adenosyl-L-homocysteine + H(+). The catalysed reaction is 6-geranylgeranyl-2-methylbenzene-1,4-diol + S-adenosyl-L-methionine = 6-geranylgeranyl-2,3-dimethylbenzene-1,4-diol + S-adenosyl-L-homocysteine + H(+). It participates in cofactor biosynthesis; tocopherol biosynthesis. Functionally, involved in a key methylation step in both tocopherol (vitamin E) and plastoquinone synthesis. Catalyzes the conversion of 2-methyl-6-phytyl-1,4-hydroquinol (MPBQ) to 2,3-dimethyl-6-phytyl-1,4-hydroquinol (DMPQ, a substrate for tocopherol cyclase), and 2-methyl-6-solanyl-1,4-benzoquinol (MSBQ) to plastoquinol. The protein is 2-methyl-6-phytyl-1,4-hydroquinone methyltransferase of Synechocystis sp. (strain ATCC 27184 / PCC 6803 / Kazusa).